The following is a 97-amino-acid chain: MDKSKRLFLKSKRSFRRRLPPIQSGDRIDYRNISLISRFISQQGKILSRRVNRLTLKQQRLITIAIKQARILSLLPFRPKAQRFKKAQRFKRSQSTV.

Belongs to the bacterial ribosomal protein bS18 family. As to quaternary structure, part of the 30S ribosomal subunit.

The protein localises to the plastid. Its subcellular location is the chloroplast. The protein is Small ribosomal subunit protein bS18c of Oenothera glazioviana (Large-flowered evening primrose).